A 127-amino-acid polypeptide reads, in one-letter code: Fumarate reductase subunit C (127 aa).

Helical transmembrane passes span 30–50 (ATVL…GSLV), 67–87 (IVVA…QTFF), and 107–127 (VVVL…LVIV).

It belongs to the FrdC family. Part of an enzyme complex containing four subunits: a flavoprotein (FrdA), an iron-sulfur protein (FrdB), and two hydrophobic anchor proteins (FrdC and FrdD).

Its subcellular location is the cell inner membrane. Its function is as follows. Anchors the catalytic components of the fumarate reductase complex to the cell membrane, binds quinones. This chain is Fumarate reductase subunit C, found in Aliivibrio fischeri (strain ATCC 700601 / ES114) (Vibrio fischeri).